Consider the following 179-residue polypeptide: Ubiquitin-conjugating enzyme E2 C (179 aa).

An N-acetylalanine modification is found at Ala-2. Ser-3 bears the Phosphoserine mark. The 146-residue stretch at 30–175 (PVGKRLQQEL…LQETYSKQVS (146 aa)) folds into the UBC core domain. Cys-114 acts as the Glycyl thioester intermediate in catalysis.

The protein belongs to the ubiquitin-conjugating enzyme family. In terms of assembly, component of the APC/C complex, composed of at least 14 distinct subunits that assemble into a complex of at least 19 chains with a combined molecular mass of around 1.2 MDa. Within this complex, directly interacts with ANAPC2. In terms of processing, autoubiquitinated by the APC/C complex, leading to its degradation by the proteasome. Its degradation plays a central role in APC/C regulation, allowing cyclin-A accumulation before S phase entry. APC/C substrates inhibit the autoubiquitination of UBE2C/UBCH10 but not its E2 function, hence APC/C remaining active until its substrates have been destroyed.

The enzyme catalyses S-ubiquitinyl-[E1 ubiquitin-activating enzyme]-L-cysteine + [E2 ubiquitin-conjugating enzyme]-L-cysteine = [E1 ubiquitin-activating enzyme]-L-cysteine + S-ubiquitinyl-[E2 ubiquitin-conjugating enzyme]-L-cysteine.. It carries out the reaction S-ubiquitinyl-[E1 ubiquitin-activating enzyme]-L-cysteine + [acceptor protein]-L-lysine = [E1 ubiquitin-activating enzyme]-L-cysteine + N(6)-monoubiquitinyl-[acceptor protein]-L-lysine.. The protein operates within protein modification; protein ubiquitination. In terms of biological role, accepts ubiquitin from the E1 complex and catalyzes its covalent attachment to other proteins. In vitro catalyzes 'Lys-11'- and 'Lys-48'-linked polyubiquitination. Acts as an essential factor of the anaphase promoting complex/cyclosome (APC/C), a cell cycle-regulated ubiquitin ligase that controls progression through mitosis. Acts by initiating 'Lys-11'-linked polyubiquitin chains on APC/C substrates, leading to the degradation of APC/C substrates by the proteasome and promoting mitotic exit. This chain is Ubiquitin-conjugating enzyme E2 C (Ube2c), found in Mus musculus (Mouse).